Here is a 228-residue protein sequence, read N- to C-terminus: Ribonuclease 3 (228 aa).

Residues 5–127 (KDALQDRLGY…LFGAIYLDGG (123 aa)) form the RNase III domain. Residue Glu-40 coordinates Mg(2+). Asp-44 is an active-site residue. Mg(2+)-binding residues include Asp-113 and Glu-116. The active site involves Glu-116. The 71-residue stretch at 154–224 (DPKTRLQEHL…AEQMLKRLED (71 aa)) folds into the DRBM domain. Residues 200–228 (AEGEAGSRRKAEQQAAEQMLKRLEDKHER) are disordered. The segment covering 218 to 228 (MLKRLEDKHER) has biased composition (basic and acidic residues).

The protein belongs to the ribonuclease III family. In terms of assembly, homodimer. Mg(2+) is required as a cofactor.

The protein localises to the cytoplasm. It carries out the reaction Endonucleolytic cleavage to 5'-phosphomonoester.. Functionally, digests double-stranded RNA. Involved in the processing of primary rRNA transcript to yield the immediate precursors to the large and small rRNAs (23S and 16S). Processes some mRNAs, and tRNAs when they are encoded in the rRNA operon. Processes pre-crRNA and tracrRNA of type II CRISPR loci if present in the organism. The sequence is that of Ribonuclease 3 from Alkalilimnicola ehrlichii (strain ATCC BAA-1101 / DSM 17681 / MLHE-1).